Reading from the N-terminus, the 405-residue chain is Phosphoglycerate kinase (405 aa).

Substrate-binding positions include 21 to 23, Arg-38, 59 to 62, Arg-116, and Arg-156; these read DFN and HQSR. Residues Glu-330 and 355–358 each bind ATP; that span reads GGHT.

The protein belongs to the phosphoglycerate kinase family. As to quaternary structure, monomer.

It is found in the cytoplasm. The enzyme catalyses (2R)-3-phosphoglycerate + ATP = (2R)-3-phospho-glyceroyl phosphate + ADP. The protein operates within carbohydrate degradation; glycolysis; pyruvate from D-glyceraldehyde 3-phosphate: step 2/5. This Methanocorpusculum labreanum (strain ATCC 43576 / DSM 4855 / Z) protein is Phosphoglycerate kinase.